The sequence spans 252 residues: 3-dehydroquinate dehydratase (252 aa).

Residues 46–48 and Arg-82 each bind 3-dehydroquinate; that span reads EWR. Catalysis depends on His-143, which acts as the Proton donor/acceptor. The active-site Schiff-base intermediate with substrate is Lys-170. The 3-dehydroquinate site is built by Arg-212, Ser-231, and Gln-235.

The protein belongs to the type-I 3-dehydroquinase family. As to quaternary structure, homodimer.

The catalysed reaction is 3-dehydroquinate = 3-dehydroshikimate + H2O. It functions in the pathway metabolic intermediate biosynthesis; chorismate biosynthesis; chorismate from D-erythrose 4-phosphate and phosphoenolpyruvate: step 3/7. Its function is as follows. Involved in the third step of the chorismate pathway, which leads to the biosynthesis of aromatic amino acids. Catalyzes the cis-dehydration of 3-dehydroquinate (DHQ) and introduces the first double bond of the aromatic ring to yield 3-dehydroshikimate. This Listeria monocytogenes serovar 1/2a (strain ATCC BAA-679 / EGD-e) protein is 3-dehydroquinate dehydratase.